A 464-amino-acid chain; its full sequence is MESGSMKTPLVNNQEEARSSSSITCGLLLSTSVAVTGSFVYGCAMSYSSPAQSKIMEELGLSVADYSFFTSVMTLGGMITAAFSGKIAAVIGRRQTMWIADVFCIFGWLAVAFAHDKMLLNIGRGFLGFGVGLISYVVPVYIAEITPKAFRGGFSFSNQLLQSFGISLMFFTGNFFHWRTLALLSAIPCGIQMICLFFIPESPRWLAMYGRERELEVTLKRLRGENGDILEEAAEIRETVETSRRESRSGLKDLFNMKNAHPLIIGLGLMLLQQFCGSSAISAYAARIFDTAGFPSDIGTSILAVILVPQSIIVMFAVDRCGRRPLLMSSSIGLCICSFLIGLSYYLQNHGDFQEFCSPILIVGLVGYVLSFGIGLGGLPWVIMSEVFPVNVKITAGSLVTVSNWFFSWIIIFSFNFMMQWSAFGTYFIFAGVSLMSFVFVWTLVPETKGRTLEDIQQSLGQLS.

Transmembrane regions (helical) follow at residues Ile-23 to Cys-43, Val-72 to Gly-92, Gln-95 to His-115, Gly-125 to Ile-145, Phe-156 to Phe-176, Thr-180 to Pro-200, Leu-263 to Ala-283, Ile-298 to Val-318, Leu-326 to Tyr-346, Pro-359 to Leu-379, Leu-399 to Met-419, and Phe-424 to Leu-444.

The protein belongs to the major facilitator superfamily. Sugar transporter (TC 2.A.1.1) family.

Its subcellular location is the membrane. Its function is as follows. Sugar transporter. In Arabidopsis thaliana (Mouse-ear cress), this protein is Sugar transporter ERD6-like 1 (SUGTL4).